Reading from the N-terminus, the 261-residue chain is Homeobox protein engrailed-2b (261 aa).

Basic and acidic residues-rich tracts occupy residues 1–21 (MEEN…DESN), 53–72 (GRRK…RENR), and 100–116 (KKTD…RAET). Disordered regions lie at residues 1–24 (MEEN…NRAI), 53–125 (GRRK…SSDS), and 152–176 (DRPS…KRPR). A DNA-binding region (homeobox) is located at residues 172–231 (DKRPRTAFTAEQLQRLKNEFQNNRYLTEQRRQALAQELGLNESQIKIWFQNKRAKIKKAT).

It belongs to the engrailed homeobox family.

The protein resides in the nucleus. The chain is Homeobox protein engrailed-2b (eng2b) from Danio rerio (Zebrafish).